The following is a 241-amino-acid chain: Trypsin-1 (241 aa).

An N-terminal signal peptide occupies residues 1 to 13 (MKSLIFVLLLGAV). Positions 14 to 19 (FAEEDK) are cleaved as a propeptide — activation peptide. The Peptidase S1 domain occupies 20–239 (IVGGYECTKH…LSGWVRDTMA (220 aa)). Disulfide bonds link C26-C155, C44-C60, C128-C228, C135-C201, C166-C180, and C191-C215. Active-site charge relay system residues include H59 and D103. The active-site Charge relay system is S195.

It belongs to the peptidase S1 family.

Its subcellular location is the secreted. It is found in the extracellular space. It catalyses the reaction Preferential cleavage: Arg-|-Xaa, Lys-|-Xaa.. The protein is Trypsin-1 of Gadus morhua (Atlantic cod).